We begin with the raw amino-acid sequence, 475 residues long: Aspartyl/glutamyl-tRNA(Asn/Gln) amidotransferase subunit B (475 aa).

The protein belongs to the GatB/GatE family. GatB subfamily. In terms of assembly, heterotrimer of A, B and C subunits.

The enzyme catalyses L-glutamyl-tRNA(Gln) + L-glutamine + ATP + H2O = L-glutaminyl-tRNA(Gln) + L-glutamate + ADP + phosphate + H(+). It catalyses the reaction L-aspartyl-tRNA(Asn) + L-glutamine + ATP + H2O = L-asparaginyl-tRNA(Asn) + L-glutamate + ADP + phosphate + 2 H(+). In terms of biological role, allows the formation of correctly charged Asn-tRNA(Asn) or Gln-tRNA(Gln) through the transamidation of misacylated Asp-tRNA(Asn) or Glu-tRNA(Gln) in organisms which lack either or both of asparaginyl-tRNA or glutaminyl-tRNA synthetases. The reaction takes place in the presence of glutamine and ATP through an activated phospho-Asp-tRNA(Asn) or phospho-Glu-tRNA(Gln). This is Aspartyl/glutamyl-tRNA(Asn/Gln) amidotransferase subunit B from Staphylococcus saprophyticus subsp. saprophyticus (strain ATCC 15305 / DSM 20229 / NCIMB 8711 / NCTC 7292 / S-41).